The sequence spans 238 residues: Large ribosomal subunit protein uL1 (238 aa).

Belongs to the universal ribosomal protein uL1 family. As to quaternary structure, part of the 50S ribosomal subunit.

Functionally, binds directly to 23S rRNA. The L1 stalk is quite mobile in the ribosome, and is involved in E site tRNA release. In terms of biological role, protein L1 is also a translational repressor protein, it controls the translation of the L11 operon by binding to its mRNA. The protein is Large ribosomal subunit protein uL1 of Picosynechococcus sp. (strain ATCC 27264 / PCC 7002 / PR-6) (Agmenellum quadruplicatum).